A 145-amino-acid polypeptide reads, in one-letter code: Small ribosomal subunit protein uS9 (145 aa).

Residues M1–S13 are compositionally biased toward polar residues. The disordered stretch occupies residues M1 to T24.

It belongs to the universal ribosomal protein uS9 family.

Its subcellular location is the cytoplasm. This chain is Small ribosomal subunit protein uS9 (RPS16), found in Lupinus polyphyllus (Large-leaved lupine).